The following is a 415-amino-acid chain: Histidine--tRNA ligase (415 aa).

The protein belongs to the class-II aminoacyl-tRNA synthetase family. In terms of assembly, homodimer.

Its subcellular location is the cytoplasm. The catalysed reaction is tRNA(His) + L-histidine + ATP = L-histidyl-tRNA(His) + AMP + diphosphate + H(+). The protein is Histidine--tRNA ligase of Rickettsia akari (strain Hartford).